Consider the following 175-residue polypeptide: Di-N-acetylchitobiase (175 aa).

The N-terminal stretch at 1–38 is a signal peptide; sequence MARLQLAGSRRLVPLPRRAPRLAPLLLPLLLALPDGAR. In terms of domain architecture, GH18 spans 39 to 175; it reads ADCPCKVPAL…SFHHEIKGSQ (137 aa). The N-linked (GlcNAc...) asparagine glycan is linked to asparagine 115. The Proton donor role is filled by glutamate 143.

The protein belongs to the glycosyl hydrolase 18 family.

The protein localises to the lysosome. Involved in the degradation of asparagine-linked glycoproteins. Hydrolyze of N-acetyl-beta-D-glucosamine (1-4)N-acetylglucosamine chitobiose core from the reducing end of the bond, it requires prior cleavage by glycosylasparaginase. This Bos taurus (Bovine) protein is Di-N-acetylchitobiase (CTBS).